Consider the following 45-residue polypeptide: Putative metallothionein-like protein 1B (45 aa).

Belongs to the metallothionein superfamily. Type 15 family.

In terms of biological role, metallothioneins have a high content of cysteine residues that bind various heavy metals. Confers tolerance to cadmium (Cd) and plays a role in Cd and zinc (Zn) homeostasis. This chain is Putative metallothionein-like protein 1B (MT1B), found in Arabidopsis thaliana (Mouse-ear cress).